Here is a 317-residue protein sequence, read N- to C-terminus: MNTGIRKDHLRKGETVSWYNSVIAGSVSGVFARMATAPMDTVKIRYQLQPVQEDKYKGIASTVRTIMKEEGLRALWKGNIPATAMYVVYGAVQFGSYSWFNNVWSAKFPRFSQQGQTLTVGALAGMTSSVVSYPLDLLRTRLIANRTSHRTSVAEECRQMWLNEGVRGFFTGISTAMTTVTLSTAIMFLTYETVNIVCENHEKEFWSRPVSASSGIIAGFVSKTMVFPIDTLRRRMQVMNSKRTVHFTKFPAVYHEYRYKSSTAIIYKILRQEGVSALYRGLTMGLCKSVPTTAISLFVYERTMDLFDHGQRWGRSP.

A run of 6 helical transmembrane segments spans residues 15–37 (TVSW…MATA), 80–100 (IPAT…YSWF), 118–138 (LTVG…LDLL), 168–190 (GFFT…MFLT), 205–227 (FWSR…TMVF), and 281–300 (GLTM…LFVY). Solcar repeat units follow at residues 16 to 103 (VSWY…FNNV), 112 to 197 (SQQG…VNIV), and 206 to 306 (WSRP…TMDL).

Belongs to the mitochondrial carrier (TC 2.A.29) family.

It is found in the mitochondrion inner membrane. Functionally, mitochondrial transporter that mediates uptake of thiamine pyrophosphate (ThPP) into mitochondria. This is Mitochondrial thiamine pyrophosphate carrier 1 (TPC1) from Kluyveromyces lactis (strain ATCC 8585 / CBS 2359 / DSM 70799 / NBRC 1267 / NRRL Y-1140 / WM37) (Yeast).